The sequence spans 475 residues: Kynureninase (475 aa).

Residues Leu-141, Thr-142, 169–172 (FPSD), Asp-254, His-257, and Tyr-279 contribute to the pyridoxal 5'-phosphate site. Residue Lys-280 is modified to N6-(pyridoxal phosphate)lysine. Residues Trp-319 and Asn-347 each coordinate pyridoxal 5'-phosphate.

This sequence belongs to the kynureninase family. As to quaternary structure, homodimer. The cofactor is pyridoxal 5'-phosphate.

The protein localises to the cytoplasm. The enzyme catalyses L-kynurenine + H2O = anthranilate + L-alanine + H(+). It carries out the reaction 3-hydroxy-L-kynurenine + H2O = 3-hydroxyanthranilate + L-alanine + H(+). It participates in amino-acid degradation; L-kynurenine degradation; L-alanine and anthranilate from L-kynurenine: step 1/1. Its pathway is cofactor biosynthesis; NAD(+) biosynthesis; quinolinate from L-kynurenine: step 2/3. Functionally, catalyzes the cleavage of L-kynurenine (L-Kyn) and L-3-hydroxykynurenine (L-3OHKyn) into anthranilic acid (AA) and 3-hydroxyanthranilic acid (3-OHAA), respectively. This chain is Kynureninase (bna5), found in Sclerotinia sclerotiorum (strain ATCC 18683 / 1980 / Ss-1) (White mold).